The following is a 141-amino-acid chain: 3-hydroxyacyl-[acyl-carrier-protein] dehydratase FabZ (141 aa).

Histidine 48 is an active-site residue.

Belongs to the thioester dehydratase family. FabZ subfamily.

Its subcellular location is the cytoplasm. The catalysed reaction is a (3R)-hydroxyacyl-[ACP] = a (2E)-enoyl-[ACP] + H2O. In terms of biological role, involved in unsaturated fatty acids biosynthesis. Catalyzes the dehydration of short chain beta-hydroxyacyl-ACPs and long chain saturated and unsaturated beta-hydroxyacyl-ACPs. This chain is 3-hydroxyacyl-[acyl-carrier-protein] dehydratase FabZ, found in Herpetosiphon aurantiacus (strain ATCC 23779 / DSM 785 / 114-95).